Here is a 207-residue protein sequence, read N- to C-terminus: uncharacterized protein (207 aa).

One can recognise a YrdC-like domain in the interval 14-201 (ARLINQAVEI…SPVILREGSG (188 aa)).

It belongs to the SUA5 family.

This is an uncharacterized protein from Haemophilus influenzae (strain ATCC 51907 / DSM 11121 / KW20 / Rd).